Consider the following 213-residue polypeptide: MTRLVLGSASAGRLKVLRQAGIDPLVAASGVDEDLVTAGLGSDTSPRDVVSTLARAKATQVAAALSHAVADDCVVISCDSQLSIDGRLYGKPQSVANARQQWQSMAGRAGQLYTGHCVIRLLNNETTYSVDETSMTTICFGNPSAEDLEAYLACGESLQVAGGFTLDGLGGWFIDAVYGDPSTVVGIGLPLTRSLLSRAGLSIAAMWAANPVI.

Catalysis depends on Asp-79, which acts as the Proton acceptor.

Belongs to the Maf family. The cofactor is a divalent metal cation.

It is found in the cytoplasm. The enzyme catalyses a ribonucleoside 5'-triphosphate + H2O = a ribonucleoside 5'-phosphate + diphosphate + H(+). It catalyses the reaction a 2'-deoxyribonucleoside 5'-triphosphate + H2O = a 2'-deoxyribonucleoside 5'-phosphate + diphosphate + H(+). Functionally, nucleoside triphosphate pyrophosphatase. May have a dual role in cell division arrest and in preventing the incorporation of modified nucleotides into cellular nucleic acids. The polypeptide is Nucleoside triphosphate pyrophosphatase (Mycobacterium leprae (strain Br4923)).